The sequence spans 248 residues: Proteasome subunit alpha type-3 (248 aa).

The protein belongs to the peptidase T1A family. As to quaternary structure, the 26S proteasome consists of a 20S proteasome core and two 19S regulatory subunits. The 20S proteasome core is composed of 28 subunits that are arranged in four stacked rings, resulting in a barrel-shaped structure. The two end rings are each formed by seven alpha subunits, and the two central rings are each formed by seven beta subunits. The catalytic chamber with the active sites is on the inside of the barrel.

The protein resides in the cytoplasm. It is found in the nucleus. In terms of biological role, the proteasome is a multicatalytic proteinase complex which is characterized by its ability to cleave peptides with Arg, Phe, Tyr, Leu, and Glu adjacent to the leaving group at neutral or slightly basic pH. The proteasome has an ATP-dependent proteolytic activity. The chain is Proteasome subunit alpha type-3 (psmA3) from Dictyostelium discoideum (Social amoeba).